We begin with the raw amino-acid sequence, 282 residues long: Acetyl-coenzyme A carboxylase carboxyl transferase subunit beta (282 aa).

The 255-residue stretch at 28–282 (IMTKCPSCRT…TKILDIHHVS (255 aa)) folds into the CoA carboxyltransferase N-terminal domain. Residues cysteine 32, cysteine 35, cysteine 51, and cysteine 54 each coordinate Zn(2+). The C4-type zinc finger occupies 32–54 (CPSCRTIMYTKELKKNLYVCDSC).

It belongs to the AccD/PCCB family. Acetyl-CoA carboxylase is a heterohexamer composed of biotin carboxyl carrier protein (AccB), biotin carboxylase (AccC) and two subunits each of ACCase subunit alpha (AccA) and ACCase subunit beta (AccD). Zn(2+) is required as a cofactor.

The protein resides in the cytoplasm. The catalysed reaction is N(6)-carboxybiotinyl-L-lysyl-[protein] + acetyl-CoA = N(6)-biotinyl-L-lysyl-[protein] + malonyl-CoA. The protein operates within lipid metabolism; malonyl-CoA biosynthesis; malonyl-CoA from acetyl-CoA: step 1/1. In terms of biological role, component of the acetyl coenzyme A carboxylase (ACC) complex. Biotin carboxylase (BC) catalyzes the carboxylation of biotin on its carrier protein (BCCP) and then the CO(2) group is transferred by the transcarboxylase to acetyl-CoA to form malonyl-CoA. The polypeptide is Acetyl-coenzyme A carboxylase carboxyl transferase subunit beta (Halalkalibacterium halodurans (strain ATCC BAA-125 / DSM 18197 / FERM 7344 / JCM 9153 / C-125) (Bacillus halodurans)).